The chain runs to 405 residues: Putative polysaccharide ligase RT0347 (405 aa).

The next 10 helical transmembrane spans lie at 23–43 (IAAT…ISFI), 77–97 (LFIA…NSLV), 120–140 (ILYL…LFFI), 156–178 (FGLY…VIII), 201–221 (ISDS…FILA), 227–247 (IFFK…PIIA), 270–290 (LFIW…GYGF), 322–342 (ILQI…CLVY), 353–375 (ISNF…MISY), and 377–397 (IWQT…KLLV).

It belongs to the O-antigen ligase family.

It is found in the membrane. This Rickettsia typhi (strain ATCC VR-144 / Wilmington) protein is Putative polysaccharide ligase RT0347.